A 325-amino-acid chain; its full sequence is Beta-ketoacyl-[acyl-carrier-protein] synthase III (325 aa).

Active-site residues include Cys112 and His250. Residues 251–255 form an ACP-binding region; sequence QANSR. Asn280 is a catalytic residue.

Belongs to the thiolase-like superfamily. FabH family. As to quaternary structure, homodimer.

It localises to the cytoplasm. It catalyses the reaction malonyl-[ACP] + acetyl-CoA + H(+) = 3-oxobutanoyl-[ACP] + CO2 + CoA. It participates in lipid metabolism; fatty acid biosynthesis. Catalyzes the condensation reaction of fatty acid synthesis by the addition to an acyl acceptor of two carbons from malonyl-ACP. Catalyzes the first condensation reaction which initiates fatty acid synthesis and may therefore play a role in governing the total rate of fatty acid production. Possesses both acetoacetyl-ACP synthase and acetyl transacylase activities. Its substrate specificity determines the biosynthesis of branched-chain and/or straight-chain of fatty acids. This chain is Beta-ketoacyl-[acyl-carrier-protein] synthase III, found in Lactococcus lactis subsp. cremoris (strain SK11).